Consider the following 257-residue polypeptide: 4-diphosphocytidyl-2-C-methyl-D-erythritol kinase (257 aa).

The active site involves Lys8. 91–101 (PMGGGLGGGSA) lines the ATP pocket. The active site involves Asp131.

It belongs to the GHMP kinase family. IspE subfamily.

It carries out the reaction 4-CDP-2-C-methyl-D-erythritol + ATP = 4-CDP-2-C-methyl-D-erythritol 2-phosphate + ADP + H(+). It participates in isoprenoid biosynthesis; isopentenyl diphosphate biosynthesis via DXP pathway; isopentenyl diphosphate from 1-deoxy-D-xylulose 5-phosphate: step 3/6. Catalyzes the phosphorylation of the position 2 hydroxy group of 4-diphosphocytidyl-2C-methyl-D-erythritol. In Petrotoga mobilis (strain DSM 10674 / SJ95), this protein is 4-diphosphocytidyl-2-C-methyl-D-erythritol kinase.